The following is a 314-amino-acid chain: Ecto-ADP-ribosyltransferase 4 (314 aa).

The N-terminal stretch at 1–46 is a signal peptide; it reads MGPLINRCKKILLPTTVPPATMRIWLLGGPLPFLLLLSGLQRPTEG. 2 disulfide bridges follow: cysteine 69–cysteine 280 and cysteine 182–cysteine 231. Residues 91 to 276 form the TR mART core domain; the sequence is KNYFRMWQKA…LQLRSTGNLS (186 aa). Residue asparagine 114 is glycosylated (N-linked (GlcNAc...) asparagine). Residue tyrosine 126 coordinates NAD(+). Asparagine 178 is a glycosylation site (N-linked (GlcNAc...) asparagine). Glutamine 206 provides a ligand contact to NAD(+). A glycan (N-linked (GlcNAc...) asparagine) is linked at asparagine 222. Serine 240 lines the NAD(+) pocket. N-linked (GlcNAc...) asparagine glycans are attached at residues asparagine 257 and asparagine 274. Alanine 285 carries the GPI-anchor amidated alanine lipid modification. A propeptide spans 286–314 (removed in mature form); that stretch reads SSKKCIPDPIAIASLSFLTSVIIFSKSRV.

Belongs to the Arg-specific ADP-ribosyltransferase family.

The protein resides in the cell membrane. The enzyme catalyses L-arginyl-[protein] + NAD(+) = N(omega)-(ADP-D-ribosyl)-L-arginyl-[protein] + nicotinamide + H(+). The sequence is that of Ecto-ADP-ribosyltransferase 4 (ART4) from Pan troglodytes (Chimpanzee).